The chain runs to 719 residues: Polyribonucleotide nucleotidyltransferase (719 aa).

The Mg(2+) site is built by D490 and D496. The KH domain occupies 557–619 (PKIEIIIIPK…KSIDAALTRI (63 aa)). The 71-residue stretch at 629 to 699 (GEIYEGKIRS…KTGKFKLSHK (71 aa)) folds into the S1 motif domain.

The protein belongs to the polyribonucleotide nucleotidyltransferase family. Mg(2+) serves as cofactor.

The protein resides in the cytoplasm. The catalysed reaction is RNA(n+1) + phosphate = RNA(n) + a ribonucleoside 5'-diphosphate. Involved in mRNA degradation. Catalyzes the phosphorolysis of single-stranded polyribonucleotides processively in the 3'- to 5'-direction. In Azobacteroides pseudotrichonymphae genomovar. CFP2, this protein is Polyribonucleotide nucleotidyltransferase.